A 429-amino-acid polypeptide reads, in one-letter code: Histidine--tRNA ligase (429 aa).

This sequence belongs to the class-II aminoacyl-tRNA synthetase family. Homodimer.

The protein localises to the cytoplasm. The enzyme catalyses tRNA(His) + L-histidine + ATP = L-histidyl-tRNA(His) + AMP + diphosphate + H(+). The chain is Histidine--tRNA ligase from Prochlorococcus marinus subsp. pastoris (strain CCMP1986 / NIES-2087 / MED4).